We begin with the raw amino-acid sequence, 210 residues long: Imidazole glycerol phosphate synthase subunit HisH (210 aa).

Positions 7-210 (KVVIIDTGCA…SQLIKNFLEM (204 aa)) constitute a Glutamine amidotransferase type-1 domain. Catalysis depends on Cys-82, which acts as the Nucleophile. Catalysis depends on residues His-192 and Glu-194.

In terms of assembly, heterodimer of HisH and HisF.

Its subcellular location is the cytoplasm. The enzyme catalyses 5-[(5-phospho-1-deoxy-D-ribulos-1-ylimino)methylamino]-1-(5-phospho-beta-D-ribosyl)imidazole-4-carboxamide + L-glutamine = D-erythro-1-(imidazol-4-yl)glycerol 3-phosphate + 5-amino-1-(5-phospho-beta-D-ribosyl)imidazole-4-carboxamide + L-glutamate + H(+). The catalysed reaction is L-glutamine + H2O = L-glutamate + NH4(+). It participates in amino-acid biosynthesis; L-histidine biosynthesis; L-histidine from 5-phospho-alpha-D-ribose 1-diphosphate: step 5/9. Its function is as follows. IGPS catalyzes the conversion of PRFAR and glutamine to IGP, AICAR and glutamate. The HisH subunit catalyzes the hydrolysis of glutamine to glutamate and ammonia as part of the synthesis of IGP and AICAR. The resulting ammonia molecule is channeled to the active site of HisF. This chain is Imidazole glycerol phosphate synthase subunit HisH, found in Photobacterium profundum (strain SS9).